Reading from the N-terminus, the 2084-residue chain is MAP kinase-activating death domain protein (2084 aa).

Residues 25–352 enclose the uDENN domain; sequence TPPMPKGLQG…VPVPGSTRVE (328 aa). Residues 117 to 253 form a disordered region; sequence PSSAAGSAGA…SPRASRKRTK (137 aa). Over residues 118–131 the composition is skewed to low complexity; that stretch reads SSAAGSAGAGNDRP. The span at 132 to 152 shows a compositional bias: gly residues; that stretch reads GNGGPGGHGGGAGGGAGGGGR. The segment covering 160 to 173 has biased composition (basic and acidic residues); sequence FRRESWRKSMERSS. Positions 174 to 183 are enriched in low complexity; sequence DSAFSSDYRS. Basic and acidic residues predominate over residues 189–204; the sequence is DSDRELTSRRDSDQQR. Residues 205-215 are compositionally biased toward basic residues; sequence LHSHHSHHQPH. The span at 234–245 shows a compositional bias: polar residues; the sequence is DSESGGSHSPSP. One can recognise a cDENN domain in the interval 373-514; sequence RFSLVDFPLH…EGTILKNHLK (142 aa). Residues 516–678 form the dDENN domain; the sequence is ALTSMTATNT…EWSLTPTNVA (163 aa). Disordered stretches follow at residues 557-588, 730-749, 811-863, 891-963, 1058-1092, 1115-1188, and 1305-1382; these read TPPH…NSPA, QPTD…SSSY, VASK…TVGS, QESD…SQSS, HSAG…GNNF, FGKK…AENQ, and SSSL…GQST. Over residues 558–588 the composition is skewed to polar residues; sequence PPHSAQASQRNSMSAQGTISSRQPSPMNSPA. Residues 824–839 show a composition bias toward low complexity; the sequence is SPVSSSSSRSDLSSPS. The span at 913-925 shows a compositional bias: basic and acidic residues; sequence HPSDSESRPEKKI. The span at 946–963 shows a compositional bias: low complexity; that stretch reads GSSGSSSSSPGRQSSQSS. Residues 1121–1131 are compositionally biased toward low complexity; it reads QKQVPVQQKQP. Residues 1168 to 1183 show a composition bias toward basic and acidic residues; it reads TQEELTRQQNQERSHS. Low complexity predominate over residues 1305-1315; that stretch reads SSSLLSSHAAS. 2 stretches are compositionally biased toward polar residues: residues 1324-1353 and 1370-1382; these read RSPS…STQL and RLSS…GQST. The 76-residue stretch at 1490-1565 folds into the Death domain; it reads GMDQGPIEMM…GLVYSQEVHN (76 aa). Residues 1794–1842 show a composition bias toward low complexity; the sequence is DIHAQQKQKHQQQQQHQQPQQQQQPHQTTTQQNQPTAVASAVPTTTAPA. Disordered regions lie at residues 1794–1865 and 1896–2084; these read DIHA…RHTV and VPVP…HRKH. Over residues 1845–1858 the composition is skewed to polar residues; the sequence is VNPNRMTAKSQAGS. Over residues 1896–1907 the composition is skewed to pro residues; it reads VPVPPTPAPPTS. Polar residues predominate over residues 1921–1932; it reads SQPSTESLASIS. Pro residues-rich tracts occupy residues 1933-1953 and 1983-1993; these read SPPP…PAIP and QYTPQPPPPFV. Low complexity-rich tracts occupy residues 2001–2029 and 2059–2077; these read LARA…HSQS and ISGS…ASAS.

It belongs to the MADD family.

It is found in the cell membrane. It localises to the cytoplasm. Functionally, guanyl-nucleotide exchange factor that regulates small GTPases. Converts GDP-bound inactive form of Rab3 to the GTP-bound active forms. This Drosophila melanogaster (Fruit fly) protein is MAP kinase-activating death domain protein.